The primary structure comprises 101 residues: MDKSKRPFRKSKRSFRRRLPPIGSGDRIDYRNMSLISRFISEQGKILSRRVNRLTLKQQRLITIAIKQARILSSLPFLNNEKQFERTESIPRATGPRTRNK.

Positions 1 to 19 (MDKSKRPFRKSKRSFRRRL) are enriched in basic residues. A disordered region spans residues 1–23 (MDKSKRPFRKSKRSFRRRLPPIG).

This sequence belongs to the bacterial ribosomal protein bS18 family. Part of the 30S ribosomal subunit.

The protein resides in the plastid. The protein localises to the chloroplast. This chain is Small ribosomal subunit protein bS18c, found in Ceratophyllum demersum (Rigid hornwort).